A 473-amino-acid chain; its full sequence is FAD-dependent urate hydroxylase (473 aa).

The protein belongs to the HpyO family. As to quaternary structure, homodimer. FAD is required as a cofactor.

The enzyme catalyses urate + NADH + O2 + H(+) = 5-hydroxyisourate + NAD(+) + H2O. The catalysed reaction is urate + NADPH + O2 + H(+) = 5-hydroxyisourate + NADP(+) + H2O. It participates in purine metabolism; urate degradation. Its function is as follows. Catalyzes the hydroxylation of urate to 5-hydroxyisourate (HIU). Is likely to be involved in the urate degradation pathway to allantoin. Is slightly more efficient (about 2.6 times) with NADPH than NADH as the electron donor. The protein is FAD-dependent urate hydroxylase of Xanthomonas campestris pv. campestris (strain ATCC 33913 / DSM 3586 / NCPPB 528 / LMG 568 / P 25).